Reading from the N-terminus, the 97-residue chain is RNA-binding protein Hfq (97 aa).

The region spanning 10-70 (DPFLNALRKE…ISTIVPARSV (61 aa)) is the Sm domain. Residues 75–97 (ENRPQAAPASTLVQVETVQQPAE) form a disordered region. Over residues 85 to 97 (TLVQVETVQQPAE) the composition is skewed to polar residues.

Belongs to the Hfq family. As to quaternary structure, homohexamer.

RNA chaperone that binds small regulatory RNA (sRNAs) and mRNAs to facilitate mRNA translational regulation in response to envelope stress, environmental stress and changes in metabolite concentrations. Also binds with high specificity to tRNAs. The polypeptide is RNA-binding protein Hfq (Neisseria meningitidis serogroup C / serotype 2a (strain ATCC 700532 / DSM 15464 / FAM18)).